The sequence spans 47 residues: U18-ctenitoxin-Pn1a (47 aa).

Cystine bridges form between Cys-2–Cys-16, Cys-9–Cys-22, Cys-13–Cys-46, Cys-15–Cys-34, and Cys-24–Cys-32.

As to expression, expressed by the venom gland.

It localises to the secreted. In terms of biological role, neurotoxin. Causes spastic paralysis and death in mice by intracerebroventricular injection at dose levels of 3 ug per mouse. This is U18-ctenitoxin-Pn1a from Phoneutria nigriventer (Brazilian armed spider).